Reading from the N-terminus, the 213-residue chain is C-type lectin domain family 4 member C (213 aa).

Over 1–21 (MVPEEEPQDREKGLWWFQLKV) the chain is Cytoplasmic. The helical; Signal-anchor for type II membrane protein transmembrane segment at 22–44 (WSMAVVSILLLSVCFTVSSVVPH) threads the bilayer. Residues 45–213 (NFMYSKTVKR…SICKMKKIYI (169 aa)) lie on the Extracellular side of the membrane. 2 disulfide bridges follow: C70–C82 and C83–C94. The C-type lectin domain maps to 90-207 (FQSSCYFIST…CHVPQKSICK (118 aa)). Residues N110 and N137 are each glycosylated (N-linked (GlcNAc...) asparagine). 2 disulfides stabilise this stretch: C111-C206 and C180-C198. Residue S139 coordinates a carbohydrate. N164 carries an N-linked (GlcNAc...) asparagine glycan. E172, N174, and E178 together coordinate Ca(2+). Residues E178, 184–186 (NFR), N194, 194–195 (ND), and Q202 each bind a carbohydrate. Residues N194 and D195 each coordinate Ca(2+).

As to quaternary structure, homodimer. In terms of tissue distribution, expressed in plasmacytoid dendritic cells (PDCs). Constitutively expressed in immature monocyte-derived dendritic cells (iMDDC) and is significantly down-regulated upon maturation with LPS but not with TNF-alpha.

The protein resides in the cell membrane. Lectin-type cell surface receptor which may play a role in antigen capturing by dendritic cells. Specifically recognizes non-sialylated galactose-terminated biantennary glycans containing the trisaccharide epitope Gal(beta1-3/4)GlcNAc(beta1-2)Man. Binds to serum IgG. Efficiently targets ligand into antigen-processing and peptide-loading compartments for presentation to T-cells. May mediate potent inhibition of induction of IFN-alpha/beta expression in plasmacytoid dendritic cells. May act as a signaling receptor that activates protein-tyrosine kinases and mobilizes intracellular calcium. In Homo sapiens (Human), this protein is C-type lectin domain family 4 member C (CLEC4C).